Reading from the N-terminus, the 324-residue chain is Glycerol-3-phosphate dehydrogenase [NAD(P)+] (324 aa).

Trp-15, Arg-35, and Lys-101 together coordinate NADPH. Residues Lys-101 and Gly-129 each coordinate sn-glycerol 3-phosphate. Ala-133 lines the NADPH pocket. 5 residues coordinate sn-glycerol 3-phosphate: Lys-184, Asp-237, Ser-247, Arg-248, and Asn-249. Lys-184 functions as the Proton acceptor in the catalytic mechanism. Residue Arg-248 coordinates NADPH. 2 residues coordinate NADPH: Val-272 and Glu-274.

This sequence belongs to the NAD-dependent glycerol-3-phosphate dehydrogenase family.

The protein localises to the cytoplasm. It catalyses the reaction sn-glycerol 3-phosphate + NAD(+) = dihydroxyacetone phosphate + NADH + H(+). It carries out the reaction sn-glycerol 3-phosphate + NADP(+) = dihydroxyacetone phosphate + NADPH + H(+). The protein operates within membrane lipid metabolism; glycerophospholipid metabolism. Catalyzes the reduction of the glycolytic intermediate dihydroxyacetone phosphate (DHAP) to sn-glycerol 3-phosphate (G3P), the key precursor for phospholipid synthesis. The polypeptide is Glycerol-3-phosphate dehydrogenase [NAD(P)+] (Gluconobacter oxydans (strain 621H) (Gluconobacter suboxydans)).